The sequence spans 463 residues: Chaperone SurA (463 aa).

The first 25 residues, 1–25 (MTKPFSVVLASLLAITSTISPLASA), serve as a signal peptide directing secretion. PpiC domains follow at residues 174–276 (GSKY…KLME) and 289–388 (VTEY…QRVG). Disordered stretches follow at residues 329–348 (ATAKESSEDTNSRGQGGDLG) and 434–463 (GDRADNNATAAPAKSADPALPAPPPAKPTR). Low complexity predominate over residues 439 to 452 (NNATAAPAKSADPA). Over residues 453–463 (LPAPPPAKPTR) the composition is skewed to pro residues.

It localises to the periplasm. It carries out the reaction [protein]-peptidylproline (omega=180) = [protein]-peptidylproline (omega=0). Functionally, chaperone involved in the correct folding and assembly of outer membrane proteins. Recognizes specific patterns of aromatic residues and the orientation of their side chains, which are found more frequently in integral outer membrane proteins. May act in both early periplasmic and late outer membrane-associated steps of protein maturation. In Xanthomonas oryzae pv. oryzae (strain KACC10331 / KXO85), this protein is Chaperone SurA.